Consider the following 357-residue polypeptide: Multiple sugar-binding periplasmic protein SbpA (357 aa).

The N-terminal stretch at Met-1–Ala-20 is a signal peptide.

This sequence belongs to the bacterial solute-binding protein 2 family.

It is found in the periplasm. Mediates chemotaxis towards D-galactose, L-arabinose and D-fucose but not towards D-fructose. Probably part of a binding-protein high affinity uptake system. In Azospirillum brasilense, this protein is Multiple sugar-binding periplasmic protein SbpA (sbpA).